The primary structure comprises 2671 residues: Stalled ribosome sensor GCN1 (2671 aa).

A2 carries the post-translational modification N-acetylalanine. HEAT repeat units lie at residues 140 to 178 (NKLV…ENPG), 257 to 293 (EFKD…LDLS), 294 to 331 (QYAL…QCSD), 385 to 423 (CVAE…EVPK), 425 to 459 (LTDW…GDTL), 460 to 500 (LQAL…SKLS), 560 to 597 (SKVQ…SLGG), 599 to 636 (KLAN…MGKT), 700 to 732 (AFIT…SLSV), and 733 to 772 (LSPD…PAGE). S729 bears the Phosphoserine mark. At S786 the chain carries Phosphoserine. Positions 804-865 (QIIEMELKEE…EAALGLLDAI (62 aa)) form a coiled coil. HEAT repeat units follow at residues 879–918 (VLVD…TLGT), 979–1016 (SLVF…HAQL), 1035–1072 (LPRV…SSSG), 1078–1115 (FAEQ…VLPS), 1155–1192 (DLQS…RYQR), 1210–1250 (YRPP…YLDS), 1251–1289 (SQVK…AHGK), 1290–1332 (ENVN…HLDK), 1335–1372 (PKVK…AVKE), 1374–1410 (AGGM…GLGI), 1413–1451 (LKQQ…MLGK), 1455–1492 (PYVV…NLSA), 1493–1530 (HGVK…CAPK), 1534–1571 (SCLP…VIRN), 1573–1609 (EILA…HFID), 1611–1648 (PSLA…LTDQ), 1653–1690 (PYLP…GMGE), 1692–1729 (CFED…GLGV), 1731–1769 (KLEK…TFGD), 1773–1810 (PYVG…MYAE), 1812–1848 (AIAL…HISG), 1921–1958 (EILP…KLGE), 1959–1996 (KILP…STSR), 2001–2038 (FFSE…TIGH), 2039–2074 (QALE…VKSR), 2076–2108 (VLPY…LTRH), 2111–2146 (VILP…VEDD), 2147–2184 (TGHR…RSKA), 2188–2225 (SHLR…KLDA), 2259–2296 (RGVT…LTSA), 2301–2338 (PSVV…GKVG), 2339–2380 (IALK…IHVK), 2382–2417 (DPLF…GAGS), 2422–2459 (AIRK…FLTD), 2546–2583 (QLPP…EPRP), 2588–2625 (QTIK…MRRG), and 2627–2661 (ELLQ…QADS). The RWDBD region stretch occupies residues 2260–2408 (GVTSILPVLR…GIRDTMLQAL (149 aa)). Residue S2276 is modified to Phosphoserine.

Belongs to the GCN1 family. As to quaternary structure, interacts with EIF2AK4/GCN2; this interaction stimulates the EIF2AK4/GCN2 kinase activity and is impaired by IMPACT upon a variety of stress conditions, such as amino acid depletion, UV-C irradiation, proteasome inhibitor treatment and glucose deprivation. Interacts with IMPACT; this prevents the interaction of GCN1 with EIF2AK4/GCN2 and inhibits EIF2AK4/GCN2 kinase activity. Interacts with RNF14; interaction takes place following ribosome stalling and promotes recruitment of RNF14. As to expression, expressed in the hypothalamus, cortex and hippocampus.

The protein resides in the cytoplasm. In terms of biological role, ribosome collision sensor that plays a key role in the RNF14-RNF25 translation quality control pathway, a pathway that takes place when a ribosome has stalled during translation, and which promotes ubiquitination and degradation of translation factors on stalled ribosomes. Directly binds to the ribosome and acts as a sentinel for colliding ribosomes: activated following ribosome stalling and promotes recruitment of RNF14, which directly ubiquitinates EEF1A1/eEF1A, leading to its degradation. In addition to EEF1A1/eEF1A, the RNF14-RNF25 translation quality control pathway mediates degradation of ETF1/eRF1 and ubiquitination of ribosomal protein. GCN1 also acts as a positive activator of the integrated stress response (ISR) by mediating activation of EIF2AK4/GCN2 in response to amino acid starvation. Interaction with EIF2AK4/GCN2 on translating ribosomes stimulates EIF2AK4/GCN2 kinase activity, leading to phosphorylation of eukaryotic translation initiation factor 2 (eIF-2-alpha/EIF2S1). EIF2S1/eIF-2-alpha phosphorylation converts EIF2S1/eIF-2-alpha into a global protein synthesis inhibitor, leading to a global attenuation of cap-dependent translation, and thus to a reduced overall utilization of amino acids, while concomitantly initiating the preferential translation of ISR-specific mRNAs, such as the transcriptional activator ATF4, and hence allowing ATF4-mediated reprogramming of amino acid biosynthetic gene expression to alleviate nutrient depletion. This Mus musculus (Mouse) protein is Stalled ribosome sensor GCN1.